A 112-amino-acid polypeptide reads, in one-letter code: Probable prefoldin subunit 1 (112 aa).

It belongs to the prefoldin subunit beta family. As to quaternary structure, heterohexamer of two PFD-alpha type and four PFD-beta type subunits.

Binds specifically to cytosolic chaperonin (c-CPN) and transfers target proteins to it. Binds to nascent polypeptide chain and promotes folding in an environment in which there are many competing pathways for nonnative proteins. The chain is Probable prefoldin subunit 1 from Schizosaccharomyces pombe (strain 972 / ATCC 24843) (Fission yeast).